The primary structure comprises 1835 residues: Protein TIC 214 (1835 aa).

Helical transmembrane passes span valine 25–leucine 45, phenylalanine 64–leucine 84, proline 87–histidine 107, leucine 124–leucine 144, valine 172–isoleucine 192, and isoleucine 221–isoleucine 241. Residues leucine 246–serine 258 are compositionally biased toward basic and acidic residues. 3 disordered regions span residues leucine 246–glutamine 304, glutamate 735–glutamate 759, and asparagine 1535–serine 1578. Residues alanine 259 to threonine 268 are compositionally biased toward acidic residues. Basic and acidic residues predominate over residues proline 1553–isoleucine 1569.

Belongs to the TIC214 family. As to quaternary structure, part of the Tic complex.

It localises to the plastid. Its subcellular location is the chloroplast inner membrane. Functionally, involved in protein precursor import into chloroplasts. May be part of an intermediate translocation complex acting as a protein-conducting channel at the inner envelope. This Liriodendron tulipifera (Tuliptree) protein is Protein TIC 214.